The primary structure comprises 532 residues: MSSTVSYWIFNSARNRIALLRGGRRLYSRAATSRNLLKWRPFSPALASSALKCGSPPGGFALRKAYRHTSTEEEDFHLQLSPEQVSDLLRAGESSHKVLDFNNGVPNSVLRFESNQLAANSPVEDRQGVATCVQTNGMMFGIFDGHGGHACAQAVSERLFYYMAVSLMSHQTLEQMEEATENMKPLLPILRWLKHPGDSIYKDVTSVHLDHLRVYWQELLDLHMEMGLSIEEALMYSFQRLDSDISLEIQAPLEDEVTRNLSLQVAFSGATACMAHVNGVHLHVANAGDCRAILGVQEENGAWSCLPLTCDHNAWNEAELSRLKREHPESEDRTLIIDDRLLGVLMPCRAFGDVQLKWSKELQRNVLARGFDTEALNIYQFTPPHYYTPPYLTAKPEVTYHRLRRQDKFLVLASDGLWDMLGNEDVVRLVVGHLSKVGRHKPDLDQRPANLGLMQSLLLQRKASGLHAADQNTATHLIRHAIGSNEYGEMEPERLAAMLTLPEDVARMYRDDITVMVVFFNSDSIDTYCKEG.

The N-terminal 69 residues, 1-69, are a transit peptide targeting the mitochondrion; it reads MSSTVSYWIF…FALRKAYRHT (69 aa). Residues 107-518 enclose the PPM-type phosphatase domain; sequence NSVLRFESNQ…YRDDITVMVV (412 aa). Positions 144, 145, 415, and 511 each coordinate Mn(2+).

The protein belongs to the PP2C family. The cofactor is Mg(2+).

It is found in the mitochondrion. The catalysed reaction is O-phospho-L-seryl-[pyruvate dehydrogenase E1 alpha subunit] + H2O = L-seryl-[pyruvate dehydrogenase E1 alpha subunit] + phosphate. Mitochondrial enzyme that catalyzes the dephosphorylation and concomitant reactivation of the alpha subunit of the E1 component of the pyruvate dehydrogenase complex (PDC), thereby stimulating the conversion of pyruvate into acetyl-CoA. Acts as a crucial regulator of T cell metabolism and function, with a particular focus on T-helper Th17. The chain is [Pyruvate dehydrogenase [acetyl-transferring]]-phosphatase 2, mitochondrial (Pdp2) from Mus musculus (Mouse).